Here is a 637-residue protein sequence, read N- to C-terminus: ATP-dependent zinc metalloprotease FtsH (637 aa).

The Cytoplasmic portion of the chain corresponds to 1–6; sequence MNNQGR. A helical membrane pass occupies residues 7 to 27; sequence SILAWAALFIFVILLFNVFQS. Over 28–103 the chain is Periplasmic; that stretch reads DGLLGVRNNI…VVPLETRMNT (76 aa). Residues 104–124 form a helical membrane-spanning segment; sequence FLGFLISWFPMLLLIGVWVFF. Residues 125–637 are Cytoplasmic-facing; the sequence is MRQMHGGGKA…TKAQKENIAS (513 aa). Position 195 to 202 (195 to 202) interacts with ATP; sequence GPPGTGKT. His417 provides a ligand contact to Zn(2+). Glu418 is a catalytic residue. 2 residues coordinate Zn(2+): His421 and Asp495. The disordered stretch occupies residues 617–637; the sequence is DKEKLHEKTKTTKAQKENIAS.

In the central section; belongs to the AAA ATPase family. The protein in the C-terminal section; belongs to the peptidase M41 family. In terms of assembly, homohexamer. It depends on Zn(2+) as a cofactor.

It localises to the cell inner membrane. In terms of biological role, acts as a processive, ATP-dependent zinc metallopeptidase for both cytoplasmic and membrane proteins. Plays a role in the quality control of integral membrane proteins. The chain is ATP-dependent zinc metalloprotease FtsH from Rickettsia typhi (strain ATCC VR-144 / Wilmington).